Reading from the N-terminus, the 446-residue chain is Bifunctional protein GlmU (446 aa).

The tract at residues 1–229 (MTEKPVALIV…EAETLGINTR (229 aa)) is pyrophosphorylase. Residues 11 to 14 (LAAG), lysine 25, glutamine 78, 83 to 84 (GT), 106 to 108 (YGD), glycine 141, glutamate 155, asparagine 170, and asparagine 227 each bind UDP-N-acetyl-alpha-D-glucosamine. Residue aspartate 108 participates in Mg(2+) binding. Asparagine 227 contributes to the Mg(2+) binding site. Positions 230–250 (AELAAAEAAFQVRARARALED) are linker. Residues 251–446 (GVTMTDPATV…MQALRQKKGN (196 aa)) form an N-acetyltransferase region. Positions 316 and 334 each coordinate UDP-N-acetyl-alpha-D-glucosamine. The active-site Proton acceptor is histidine 346. Residues tyrosine 349 and asparagine 360 each contribute to the UDP-N-acetyl-alpha-D-glucosamine site. Acetyl-CoA is bound by residues alanine 363, 369–370 (NY), serine 388, serine 406, and arginine 423.

This sequence in the N-terminal section; belongs to the N-acetylglucosamine-1-phosphate uridyltransferase family. It in the C-terminal section; belongs to the transferase hexapeptide repeat family. Homotrimer. Requires Mg(2+) as cofactor.

The protein resides in the cytoplasm. It catalyses the reaction alpha-D-glucosamine 1-phosphate + acetyl-CoA = N-acetyl-alpha-D-glucosamine 1-phosphate + CoA + H(+). It carries out the reaction N-acetyl-alpha-D-glucosamine 1-phosphate + UTP + H(+) = UDP-N-acetyl-alpha-D-glucosamine + diphosphate. It functions in the pathway nucleotide-sugar biosynthesis; UDP-N-acetyl-alpha-D-glucosamine biosynthesis; N-acetyl-alpha-D-glucosamine 1-phosphate from alpha-D-glucosamine 6-phosphate (route II): step 2/2. It participates in nucleotide-sugar biosynthesis; UDP-N-acetyl-alpha-D-glucosamine biosynthesis; UDP-N-acetyl-alpha-D-glucosamine from N-acetyl-alpha-D-glucosamine 1-phosphate: step 1/1. The protein operates within bacterial outer membrane biogenesis; LPS lipid A biosynthesis. Functionally, catalyzes the last two sequential reactions in the de novo biosynthetic pathway for UDP-N-acetylglucosamine (UDP-GlcNAc). The C-terminal domain catalyzes the transfer of acetyl group from acetyl coenzyme A to glucosamine-1-phosphate (GlcN-1-P) to produce N-acetylglucosamine-1-phosphate (GlcNAc-1-P), which is converted into UDP-GlcNAc by the transfer of uridine 5-monophosphate (from uridine 5-triphosphate), a reaction catalyzed by the N-terminal domain. The chain is Bifunctional protein GlmU from Paracoccus denitrificans (strain Pd 1222).